A 400-amino-acid chain; its full sequence is Glycine betaine/proline betaine transport system ATP-binding protein ProV (400 aa).

One can recognise an ABC transporter domain in the interval 29-265 (LSKEQILEKT…PANDYVRTFF (237 aa)). 61–68 (GLSGSGKS) is an ATP binding site. CBS domains are found at residues 280–341 (ARRS…GIEA) and 343–400 (LIDD…GNNG).

Belongs to the ABC transporter superfamily. The complex is composed of two ATP-binding proteins (ProV), two transmembrane proteins (ProW) and a solute-binding protein (ProX).

Its subcellular location is the cell inner membrane. Functionally, part of the ProU ABC transporter complex involved in glycine betaine and proline betaine uptake. Probably responsible for energy coupling to the transport system. This Salmonella typhimurium (strain LT2 / SGSC1412 / ATCC 700720) protein is Glycine betaine/proline betaine transport system ATP-binding protein ProV.